The sequence spans 52 residues: UPF0057 membrane protein PA0567 (52 aa).

Transmembrane regions (helical) follow at residues 6-26 and 29-49; these read ILIAILLPPLGVFLQVGFGGA and LNILLTLLGYIPGIVHAVYII.

The protein belongs to the UPF0057 (PMP3) family.

Its subcellular location is the cell membrane. The protein is UPF0057 membrane protein PA0567 of Pseudomonas aeruginosa (strain ATCC 15692 / DSM 22644 / CIP 104116 / JCM 14847 / LMG 12228 / 1C / PRS 101 / PAO1).